Consider the following 63-residue polypeptide: Putative flagellar calcium-binding protein (63 aa).

The span at 1–11 shows a compositional bias: polar residues; that stretch reads MGCISSKSTQT. The interval 1 to 23 is disordered; that stretch reads MGCISSKSTQTGKKEGKTAAERK. Basic and acidic residues predominate over residues 12–23; it reads GKKEGKTAAERK. One can recognise an EF-hand domain in the interval 40-63; it reads EDKARRIELFKKFDKNNTGKLSME. Ca(2+)-binding residues include aspartate 53, asparagine 55, threonine 57, and lysine 59.

It belongs to the calflagin family.

It is found in the cell projection. It localises to the cilium. Its subcellular location is the flagellum. In Crithidia fasciculata, this protein is Putative flagellar calcium-binding protein (CABP).